The following is a 205-amino-acid chain: Outer-membrane lipoprotein LolB (205 aa).

A signal peptide spans 1 to 17 (MFLRHCITFTMIALLAG). C18 is lipidated: N-palmitoyl cysteine. C18 is lipidated: S-diacylglycerol cysteine.

It belongs to the LolB family. As to quaternary structure, monomer.

It localises to the cell outer membrane. Its function is as follows. Plays a critical role in the incorporation of lipoproteins in the outer membrane after they are released by the LolA protein. The polypeptide is Outer-membrane lipoprotein LolB (Pseudomonas putida (strain ATCC 700007 / DSM 6899 / JCM 31910 / BCRC 17059 / LMG 24140 / F1)).